Here is a 172-residue protein sequence, read N- to C-terminus: Gastrula zinc finger protein XlCGF51.1A (172 aa).

6 consecutive C2H2-type zinc fingers follow at residues 6–28 (FSCS…NKIH), 34–56 (LICS…QRSH), 62–84 (FSCT…QRTH), 90–112 (FSCT…MLKH), 122–144 (LDCS…RKSH), and 150–172 (LQCS…QRVH).

This sequence belongs to the krueppel C2H2-type zinc-finger protein family.

The protein resides in the nucleus. Functionally, may be involved in transcriptional regulation. The sequence is that of Gastrula zinc finger protein XlCGF51.1A from Xenopus laevis (African clawed frog).